The primary structure comprises 489 residues: Betaine aldehyde dehydrogenase (489 aa).

Residues T26 and D93 each coordinate K(+). 150–152 (GAW) is an NAD(+) binding site. K162 (charge relay system) is an active-site residue. 176–179 (KPSE) contributes to the NAD(+) binding site. Residue V180 coordinates K(+). Residue 229–232 (GVET) coordinates NAD(+). L245 serves as a coordination point for K(+). Catalysis depends on E251, which acts as the Proton acceptor. NAD(+)-binding residues include G253, C285, and E386. The active-site Nucleophile is C285. A Cysteine sulfenic acid (-SOH) modification is found at C285. The K(+) site is built by K456 and G459. Catalysis depends on E463, which acts as the Charge relay system.

It belongs to the aldehyde dehydrogenase family. As to quaternary structure, dimer of dimers. K(+) is required as a cofactor.

The enzyme catalyses betaine aldehyde + NAD(+) + H2O = glycine betaine + NADH + 2 H(+). Its pathway is amine and polyamine biosynthesis; betaine biosynthesis via choline pathway; betaine from betaine aldehyde: step 1/1. In terms of biological role, involved in the biosynthesis of the osmoprotectant glycine betaine. Catalyzes the irreversible oxidation of betaine aldehyde to the corresponding acid. In Burkholderia pseudomallei (strain 668), this protein is Betaine aldehyde dehydrogenase.